The sequence spans 621 residues: uncharacterized protein (621 aa).

Composition is skewed to low complexity over residues 1–10 (MIEDNINNNE), 63–79 (TEPLTTQLSSSPTTTPS), 137–182 (NNNN…NNFN), and 309–347 (NQSIQQLQQQQQQQQQQQQQQNNNDNNNNNNNNNNNNNN). Disordered regions lie at residues 1–29 (MIEDNINNNENENEDKNGNGNENENDKNN), 63–100 (TEPLTTQLSSSPTTTPSLKKRKPKTVRNPFIGPSSNKT), 135–194 (DDNN…KDND), 307–374 (KTNQ…EDDT), 430–471 (YNNN…IAKR), 492–539 (KQSQ…IKII), and 594–614 (PTQINSNSSNNIVSPSSSPSK). The span at 348–357 (STLTSSNSLS) shows a compositional bias: polar residues. 3 stretches are compositionally biased toward low complexity: residues 431–459 (NNNNNNNNNNNNNNNNNNNNNNNNNNNNN), 496–539 (NNNN…IKII), and 597–613 (INSNSSNNIVSPSSSPS).

This is an uncharacterized protein from Dictyostelium discoideum (Social amoeba).